The chain runs to 487 residues: Glutamyl-tRNA(Gln) amidotransferase subunit A (487 aa).

Catalysis depends on charge relay system residues K79 and S154. Catalysis depends on S178, which acts as the Acyl-ester intermediate.

Belongs to the amidase family. GatA subfamily. In terms of assembly, heterotrimer of A, B and C subunits.

The enzyme catalyses L-glutamyl-tRNA(Gln) + L-glutamine + ATP + H2O = L-glutaminyl-tRNA(Gln) + L-glutamate + ADP + phosphate + H(+). In terms of biological role, allows the formation of correctly charged Gln-tRNA(Gln) through the transamidation of misacylated Glu-tRNA(Gln) in organisms which lack glutaminyl-tRNA synthetase. The reaction takes place in the presence of glutamine and ATP through an activated gamma-phospho-Glu-tRNA(Gln). This chain is Glutamyl-tRNA(Gln) amidotransferase subunit A, found in Heliobacterium modesticaldum (strain ATCC 51547 / Ice1).